A 534-amino-acid polypeptide reads, in one-letter code: MKYIIVTGGVMSGLGKGITTASVGRNLKNKGYKVTAIKIDPYINIDAGTMSPYQHGEVYVLKDGGEVDLDLGNYERFLDTELTRDHNLTTGKIYQTVIDKERKGEYLGKTVQIIPHITNEIKDRIRRIAAKSGADVCLIEVGGTVGDIESMPFLEAVRQMYREESPENIALLHVTLVPIDSQGDQKTKPTQHSVKELRELGLTPHVIVSRCKKALMESTRSKIALFCDVPVEAVISAHDSADIYEVPLQLENEGLSNYLLKKLILKSTLEDTNWEEMVIRMNNCTGNVNVAIVGKYTHLEDSYISIVESLKHGAIEIGCKFEITWFDAESFDDDPSEVEKLNGFDGILVPGGFGERGTEGKMLAIKYARENNIPYLGLCLGMQLAVIEFARNVVGLDGANSSEFDENTPYPVIDLLPEQEDVVDMGATMRLGDYEATLKAGSLAESIYGASLITERHRHRYEVNPNYVDRIEEHGMIFSGKNKNRMEIAEVPSKDFYFASQFHPEFKSRPGRPSPPFKAFMGAMLKKSKEKKDQ.

An amidoligase domain region spans residues 1-265 (MKYIIVTGGV…SNYLLKKLIL (265 aa)). Ser12 is a binding site for CTP. Ser12 is a binding site for UTP. 13-18 (GLGKGI) contacts ATP. Tyr53 contacts L-glutamine. An ATP-binding site is contributed by Asp70. Mg(2+) contacts are provided by Asp70 and Glu140. Residues 147–149 (DIE), 186–191 (KTKPTQ), and Lys222 contribute to the CTP site. Residues 186-191 (KTKPTQ) and Lys222 each bind UTP. Residues 289-530 (NVAIVGKYTH…MGAMLKKSKE (242 aa)) enclose the Glutamine amidotransferase type-1 domain. L-glutamine is bound at residue Gly352. The Nucleophile; for glutamine hydrolysis role is filled by Cys379. Residues 380-383 (LGMQ), Glu403, and Arg460 each bind L-glutamine. Residues His503 and Glu505 contribute to the active site.

This sequence belongs to the CTP synthase family. In terms of assembly, homotetramer.

It catalyses the reaction UTP + L-glutamine + ATP + H2O = CTP + L-glutamate + ADP + phosphate + 2 H(+). The enzyme catalyses L-glutamine + H2O = L-glutamate + NH4(+). It carries out the reaction UTP + NH4(+) + ATP = CTP + ADP + phosphate + 2 H(+). Its pathway is pyrimidine metabolism; CTP biosynthesis via de novo pathway; CTP from UDP: step 2/2. With respect to regulation, allosterically activated by GTP, when glutamine is the substrate; GTP has no effect on the reaction when ammonia is the substrate. The allosteric effector GTP functions by stabilizing the protein conformation that binds the tetrahedral intermediate(s) formed during glutamine hydrolysis. Inhibited by the product CTP, via allosteric rather than competitive inhibition. In terms of biological role, catalyzes the ATP-dependent amination of UTP to CTP with either L-glutamine or ammonia as the source of nitrogen. Regulates intracellular CTP levels through interactions with the four ribonucleotide triphosphates. The sequence is that of CTP synthase from Methanococcoides burtonii (strain DSM 6242 / NBRC 107633 / OCM 468 / ACE-M).